The sequence spans 130 residues: Large ribosomal subunit protein bL19 (130 aa).

This sequence belongs to the bacterial ribosomal protein bL19 family.

In terms of biological role, this protein is located at the 30S-50S ribosomal subunit interface and may play a role in the structure and function of the aminoacyl-tRNA binding site. The sequence is that of Large ribosomal subunit protein bL19 from Burkholderia vietnamiensis (strain G4 / LMG 22486) (Burkholderia cepacia (strain R1808)).